The following is a 1849-amino-acid chain: NADH-ubiquinone oxidoreductase chain 5 (1849 aa).

Helical transmembrane passes span 76–93 (YLLLYYCIYALELYTVCY), 98–120 (LILLYLIQLNYILLTNIVGYLQY), 190–212 (YWLCVVIWNNIGWWTYQLMIIGW), 222–244 (LVPTILAIINLILTYIDLIIYLY), 279–301 (HLLTVIIPNYCLAIYNSGLILSS), 316–338 (LALQYLVAPLYISCSLLIYILCY), 358–380 (LEIIYLDILVNSLISIIILILSV), 390–412 (VIILSQYINIISGYVAMPTTILI), 419–441 (IAVYIYYLVDYIATISTLIIWLL), 483–505 (LLDAIMNVVTSVILLITVSCLGV), 510–532 (LFIAVYPVYCIGVLLLNTLLQVV), 536–558 (ISYIIGTFMNAIILICDIYVYSI), 565–587 (LIMYVYFVAAIILEPIIDIIHTI), 621–640 (IWLIADLILAYIDLIRSTLV), 683–705 (WVRFLIYCAGNNINLLVLLYVQF), 718–740 (LTRIQLYATIPVIISSYIYQGIL), 745–767 (IISYYNTLLVATLEFIQIWLTIL), 797–819 (PTWVLFECLSTCVGLVELYLVTV), 868–890 (ILLLMSSGLQSTVLNTIFDLLSL), 905–927 (LTVQVCTIPAALYSTIIYPYIVL), 966–988 (LYSYNLYLLELYNIYYFWLSLLE), 1008–1030 (PDLLISLISYIIDICILSLELLL), 1073–1095 (LTVVFYILNLCGILNEISIQILF), 1105–1127 (LATIYCTVVLPYILIILEILSYL), 1172–1194 (TYLLYIVLEQLLLVIIDLYIYII), 1219–1241 (VYFLYFMIFIGYLLCGIFAFFYH), 1248–1270 (GIFYLSEMIIMGILIFSIVTLYY), 1296–1318 (IITFDILSILGVLLVATLTAIIL), 1330–1352 (FAYNVLATLVLFSASIICFIVSY), 1357–1379 (MIIFWEISGTLSLFLIDMYYARI), 1418–1440 (LFALLPYAQFNLSILGNLIFDFT), 1444–1466 (VIVFSIFSAAACKCAQFLLFVWL), 1478–1500 (ALIHSSTLVVMGIFMILRFAPIL), 1504–1526 (VYTLYIMSILGSLTVAYGAILAT), 1533–1555 (KAVAYSTISQIGYLFTGCAFLAF), 1559–1581 (LIYLILHAICKALLFVLVGYIVH), 1602–1624 (IAIYMFILCMVLAGAPYTVGFFA), 1639–1661 (VATFIICCWIISFACTPFYLYRI), 1719–1741 (LLHLLLLLIVLFCGEFLVFLVTG), 1773–1795 (VRNIQLLIIVLFALVTLYITAIN), and 1802–1824 (IIYLSVVLPILAIIFICLGHYFL).

Belongs to the complex I subunit 5 family.

The protein resides in the hydrogenosome membrane. It carries out the reaction a ubiquinone + NADH + 5 H(+)(in) = a ubiquinol + NAD(+) + 4 H(+)(out). The sequence is that of NADH-ubiquinone oxidoreductase chain 5 (nad5) from Nyctotherus ovalis.